A 286-amino-acid polypeptide reads, in one-letter code: Shikimate dehydrogenase (NADP(+)) (286 aa).

Shikimate is bound by residues 20-22 and threonine 65; that span reads SLS. Lysine 69 acts as the Proton acceptor in catalysis. Residue aspartate 81 participates in NADP(+) binding. Shikimate contacts are provided by asparagine 90 and aspartate 105. NADP(+)-binding positions include 128–132 and threonine 217; that span reads GAGGA. Position 219 (tyrosine 219) interacts with shikimate. Position 240 (glycine 240) interacts with NADP(+).

It belongs to the shikimate dehydrogenase family. In terms of assembly, homodimer.

It carries out the reaction shikimate + NADP(+) = 3-dehydroshikimate + NADPH + H(+). The protein operates within metabolic intermediate biosynthesis; chorismate biosynthesis; chorismate from D-erythrose 4-phosphate and phosphoenolpyruvate: step 4/7. Involved in the biosynthesis of the chorismate, which leads to the biosynthesis of aromatic amino acids. Catalyzes the reversible NADPH linked reduction of 3-dehydroshikimate (DHSA) to yield shikimate (SA). In Syntrophobacter fumaroxidans (strain DSM 10017 / MPOB), this protein is Shikimate dehydrogenase (NADP(+)).